The chain runs to 225 residues: Protein-L-isoaspartate O-methyltransferase (225 aa).

Ser-75 is an active-site residue.

This sequence belongs to the methyltransferase superfamily. L-isoaspartyl/D-aspartyl protein methyltransferase family.

The protein resides in the cytoplasm. The catalysed reaction is [protein]-L-isoaspartate + S-adenosyl-L-methionine = [protein]-L-isoaspartate alpha-methyl ester + S-adenosyl-L-homocysteine. Its function is as follows. Catalyzes the methyl esterification of L-isoaspartyl residues in peptides and proteins that result from spontaneous decomposition of normal L-aspartyl and L-asparaginyl residues. It plays a role in the repair and/or degradation of damaged proteins. The polypeptide is Protein-L-isoaspartate O-methyltransferase (Xanthomonas euvesicatoria pv. vesicatoria (strain 85-10) (Xanthomonas campestris pv. vesicatoria)).